The sequence spans 358 residues: Putative myc-like protein MYCLP1 (358 aa).

Disordered regions lie at residues 150–171 and 219–245; these read ACSR…TVKK and QEGA…DKED. Basic and acidic residues predominate over residues 227 to 242; sequence PPKEALEREAPGGKDD. The bHLH domain maps to 274-326; the sequence is WTKKKYHSYLERKRRNDQRSRFLALRDEVPALASCSRVSKVMILVKATEYLHE.

As to quaternary structure, efficient DNA binding requires dimerization with another bHLH protein. Binds DNA as a heterodimer with MAX. As to expression, detected in adult testis.

It is found in the nucleus. This chain is Putative myc-like protein MYCLP1 (MYCLP1), found in Homo sapiens (Human).